A 166-amino-acid polypeptide reads, in one-letter code: 3-isopropylmalate dehydratase small subunit (166 aa).

This sequence belongs to the LeuD family. LeuD type 2 subfamily. In terms of assembly, heterodimer of LeuC and LeuD.

The enzyme catalyses (2R,3S)-3-isopropylmalate = (2S)-2-isopropylmalate. It functions in the pathway amino-acid biosynthesis; L-leucine biosynthesis; L-leucine from 3-methyl-2-oxobutanoate: step 2/4. In terms of biological role, catalyzes the isomerization between 2-isopropylmalate and 3-isopropylmalate, via the formation of 2-isopropylmaleate. In Caldicellulosiruptor bescii (strain ATCC BAA-1888 / DSM 6725 / KCTC 15123 / Z-1320) (Anaerocellum thermophilum), this protein is 3-isopropylmalate dehydratase small subunit.